The chain runs to 123 residues: Amoebiasin-2 (123 aa).

An N-terminal signal peptide occupies residues M1–A16. The short motif at N45–Y50 is the BC loop element. Residues E71–P81 carry the DE loop motif. Positions P105 to R114 match the FG loop motif.

It belongs to the protease inhibitor I42 family. Monomer. May form homodimer. Interacts with cysteine protease CP2. Interacts with cysteine protease CP5.

It localises to the cytoplasmic vesicle. The protein resides in the lysosome. Its subcellular location is the phagosome. Its function is as follows. Cysteine protease inhibitor. Inhibits cysteine proteases CP1, CP2 and to a lesser extent CP5. The polypeptide is Amoebiasin-2 (Entamoeba histolytica (strain ATCC 30459 / HM-1:IMSS / ABRM)).